The sequence spans 167 residues: uncharacterized protein (167 aa).

Positions 48, 127, and 131 each coordinate a divalent metal cation.

Belongs to the DinB family.

This is an uncharacterized protein from Bacillus subtilis (strain 168).